We begin with the raw amino-acid sequence, 139 residues long: ATP synthase epsilon chain (139 aa).

This sequence belongs to the ATPase epsilon chain family. In terms of assembly, F-type ATPases have 2 components, CF(1) - the catalytic core - and CF(0) - the membrane proton channel. CF(1) has five subunits: alpha(3), beta(3), gamma(1), delta(1), epsilon(1). CF(0) has three main subunits: a, b and c.

Its subcellular location is the cell inner membrane. Its function is as follows. Produces ATP from ADP in the presence of a proton gradient across the membrane. This chain is ATP synthase epsilon chain, found in Enterobacter sp. (strain 638).